The sequence spans 508 residues: WD repeat-containing protein DDB_G0290555 (508 aa).

WD repeat units follow at residues 32-74, 159-198, 252-292, and 295-334; these read TSEL…LIGE, NVATNLSGFAMNPSNDKFAFGGKDVNLTIWDLEKQVKTYS, FSKH…QVGS, and DSAGSVKDIAIHPTLPLLATVGLDRHLRVYNLDNRKMLHK. Positions 368 to 508 are disordered; the sequence is ENKNRINNDD…KKFAGLKKRK (141 aa). Acidic residues predominate over residues 399–435; sequence MDSDDDIEDGDDNDVEFPMEADSDDSDFDLGNSDDDN. Basic and acidic residues predominate over residues 436–446; sequence ISVKKENKGDS. The span at 447-456 shows a compositional bias: acidic residues; that stretch reads DDSDDDSDED. Positions 471–493 are enriched in low complexity; the sequence is NNNNNNNKGKNNKGKNNSSTKKT. A compositionally biased stretch (basic residues) spans 497-508; sequence LKKKFAGLKKRK.

This chain is WD repeat-containing protein DDB_G0290555, found in Dictyostelium discoideum (Social amoeba).